Reading from the N-terminus, the 253-residue chain is Vitamin B12 import ATP-binding protein BtuD (253 aa).

In terms of domain architecture, ABC transporter spans 3–237; sequence LDAKNLAMPP…EQLESTFATQ (235 aa). Residue 31–38 coordinates ATP; sequence GPNGSGKS.

This sequence belongs to the ABC transporter superfamily. Vitamin B12 importer (TC 3.A.1.13.1) family. The complex is composed of two ATP-binding proteins (BtuD), two transmembrane proteins (BtuC) and a solute-binding protein (BtuF).

Its subcellular location is the cell inner membrane. The catalysed reaction is an R-cob(III)alamin(out) + ATP + H2O = an R-cob(III)alamin(in) + ADP + phosphate + H(+). Its function is as follows. Part of the ABC transporter complex BtuCDF involved in vitamin B12 import. Responsible for energy coupling to the transport system. In Photobacterium profundum (strain SS9), this protein is Vitamin B12 import ATP-binding protein BtuD.